The sequence spans 278 residues: Protein irg-2 (278 aa).

The segment at 152-179 (NSIRGQPFKSLQPENRTPTQVTGHQQES) is disordered. Residues 163–179 (QPENRTPTQVTGHQQES) are compositionally biased toward polar residues.

Functionally, plays a role in innate immunity by conferring resistance to virulent strains of the Gram-negative bacterium P.aeruginosa via the zip-2 pathway and independent of the pmk-1 p38MAPK pathway. Induced as part of several immune responses to translational inhibition arising from endocytosis of ToxA during P.aeruginosa infection or exposure to exogenous cycloheximide. The polypeptide is Protein irg-2 (Caenorhabditis elegans).